We begin with the raw amino-acid sequence, 226 residues long: GTP-binding nuclear protein Ran-3 (226 aa).

The Small GTPase Ran-type domain maps to 14-178 (GYPSFKLILV…LYLARKLTGD (165 aa)). 25 to 32 (DGGTGKTT) is a binding site for GTP. The tract at residues 44-52 (KRYEPTIGV) is switch-I. GTP-binding positions include Gly-75, 129–132 (NKVD), and 157–159 (SAK). The tract at residues 75-91 (GQEKFGGLRDGYYIHGH) is switch-II.

It belongs to the small GTPase superfamily. Ran family. In terms of assembly, found in a nuclear export complex with RanGTP, exportin and pre-miRNA.

The protein localises to the nucleus. Functionally, GTP-binding protein involved in nucleocytoplasmic transport. Required for the import of protein into the nucleus and also for RNA export. Involved in chromatin condensation and control of cell cycle. This is GTP-binding nuclear protein Ran-3 (RAN3) from Oryza sativa subsp. indica (Rice).